The primary structure comprises 337 residues: Holliday junction branch migration complex subunit RuvB (337 aa).

The interval 1–179 (MTHQVSVLHQ…FSFTGRVAYY (179 aa)) is large ATPase domain (RuvB-L). ATP-binding positions include L18, R19, G60, K63, T64, S65, 126–128 (EDY), R169, Y179, and R216. Position 64 (T64) interacts with Mg(2+). The interval 180 to 250 (SDEDLATILR…VAEKALAMLL (71 aa)) is small ATPAse domain (RuvB-S). A head domain (RuvB-H) region spans residues 253-337 (EWGLNEIDIK…DNLQSLGEEK (85 aa)). Positions 308 and 313 each coordinate DNA.

This sequence belongs to the RuvB family. Homohexamer. Forms an RuvA(8)-RuvB(12)-Holliday junction (HJ) complex. HJ DNA is sandwiched between 2 RuvA tetramers; dsDNA enters through RuvA and exits via RuvB. An RuvB hexamer assembles on each DNA strand where it exits the tetramer. Each RuvB hexamer is contacted by two RuvA subunits (via domain III) on 2 adjacent RuvB subunits; this complex drives branch migration. In the full resolvosome a probable DNA-RuvA(4)-RuvB(12)-RuvC(2) complex forms which resolves the HJ.

It is found in the cytoplasm. The enzyme catalyses ATP + H2O = ADP + phosphate + H(+). The RuvA-RuvB-RuvC complex processes Holliday junction (HJ) DNA during genetic recombination and DNA repair, while the RuvA-RuvB complex plays an important role in the rescue of blocked DNA replication forks via replication fork reversal (RFR). RuvA specifically binds to HJ cruciform DNA, conferring on it an open structure. The RuvB hexamer acts as an ATP-dependent pump, pulling dsDNA into and through the RuvAB complex. RuvB forms 2 homohexamers on either side of HJ DNA bound by 1 or 2 RuvA tetramers; 4 subunits per hexamer contact DNA at a time. Coordinated motions by a converter formed by DNA-disengaged RuvB subunits stimulates ATP hydrolysis and nucleotide exchange. Immobilization of the converter enables RuvB to convert the ATP-contained energy into a lever motion, pulling 2 nucleotides of DNA out of the RuvA tetramer per ATP hydrolyzed, thus driving DNA branch migration. The RuvB motors rotate together with the DNA substrate, which together with the progressing nucleotide cycle form the mechanistic basis for DNA recombination by continuous HJ branch migration. Branch migration allows RuvC to scan DNA until it finds its consensus sequence, where it cleaves and resolves cruciform DNA. In Chlamydia abortus (strain DSM 27085 / S26/3) (Chlamydophila abortus), this protein is Holliday junction branch migration complex subunit RuvB.